Consider the following 78-residue polypeptide: Acyl carrier protein (78 aa).

Positions 2–77 constitute a Carrier domain; sequence SEIASRVKAI…DAVAYIEEHA (76 aa). The residue at position 37 (Ser37) is an O-(pantetheine 4'-phosphoryl)serine.

It belongs to the acyl carrier protein (ACP) family. In terms of processing, 4'-phosphopantetheine is transferred from CoA to a specific serine of apo-ACP by AcpS. This modification is essential for activity because fatty acids are bound in thioester linkage to the sulfhydryl of the prosthetic group.

Its subcellular location is the cytoplasm. It participates in lipid metabolism; fatty acid biosynthesis. Its function is as follows. Carrier of the growing fatty acid chain in fatty acid biosynthesis. The sequence is that of Acyl carrier protein from Bacteroides fragilis (strain ATCC 25285 / DSM 2151 / CCUG 4856 / JCM 11019 / LMG 10263 / NCTC 9343 / Onslow / VPI 2553 / EN-2).